We begin with the raw amino-acid sequence, 88 residues long: Small ribosomal subunit protein bS20 (88 aa).

The tract at residues 1 to 23 is disordered; sequence MANTSSAKKATRKIARRAAINKN.

The protein belongs to the bacterial ribosomal protein bS20 family.

In terms of biological role, binds directly to 16S ribosomal RNA. The protein is Small ribosomal subunit protein bS20 of Mesorhizobium japonicum (strain LMG 29417 / CECT 9101 / MAFF 303099) (Mesorhizobium loti (strain MAFF 303099)).